The following is a 128-amino-acid chain: Regulator of ribonuclease activity B (128 aa).

This sequence belongs to the RraB family. Interacts with the C-terminal region of Rne.

The protein localises to the cytoplasm. Its function is as follows. Globally modulates RNA abundance by binding to RNase E (Rne) and regulating its endonucleolytic activity. Can modulate Rne action in a substrate-dependent manner by altering the composition of the degradosome. The polypeptide is Regulator of ribonuclease activity B (Idiomarina loihiensis (strain ATCC BAA-735 / DSM 15497 / L2-TR)).